We begin with the raw amino-acid sequence, 543 residues long: 2-succinyl-5-enolpyruvyl-6-hydroxy-3-cyclohexene-1-carboxylate synthase (543 aa).

This sequence belongs to the TPP enzyme family. MenD subfamily. Homodimer. It depends on Mg(2+) as a cofactor. Mn(2+) is required as a cofactor. Requires thiamine diphosphate as cofactor.

The enzyme catalyses isochorismate + 2-oxoglutarate + H(+) = 5-enolpyruvoyl-6-hydroxy-2-succinyl-cyclohex-3-ene-1-carboxylate + CO2. Its pathway is quinol/quinone metabolism; 1,4-dihydroxy-2-naphthoate biosynthesis; 1,4-dihydroxy-2-naphthoate from chorismate: step 2/7. It participates in quinol/quinone metabolism; menaquinone biosynthesis. Catalyzes the thiamine diphosphate-dependent decarboxylation of 2-oxoglutarate and the subsequent addition of the resulting succinic semialdehyde-thiamine pyrophosphate anion to isochorismate to yield 2-succinyl-5-enolpyruvyl-6-hydroxy-3-cyclohexene-1-carboxylate (SEPHCHC). The sequence is that of 2-succinyl-5-enolpyruvyl-6-hydroxy-3-cyclohexene-1-carboxylate synthase from Corynebacterium glutamicum (strain R).